A 244-amino-acid polypeptide reads, in one-letter code: Transcription initiation factor TFIID subunit 14 (244 aa).

In terms of domain architecture, YEATS spans 1-134 (MVATVKRTIR…PLLTEELAKS (134 aa)). Acylated histone binding stretches follow at residues 59-61 (HPT) and 81-83 (WGG). Residues 133 to 169 (KSGSTEETTANTGTIGKRRTTTNTTAEPKAKRAKTGS) form a disordered region. The span at 143–157 (NTGTIGKRRTTTNTT) shows a compositional bias: low complexity. Residue Lys181 forms a Glycyl lysine isopeptide (Lys-Gly) (interchain with G-Cter in ubiquitin) linkage.

The protein belongs to the TAF14 family. As to quaternary structure, the 1.2 MDa TFIID complex is composed of TATA binding protein (TBP) and the 14 TBP-associated factors. One copy of each TAF1, TAF2, TAF3, TAF7, TAF8, TAF11, TAF13, two copies of each TAF4, TAF5, TAF6, TAF9, TAF10, TAF12, and three copies of TAF14. TFIIF is composed of three different subunits: TFG1/RAP74, TFG2/RAP30 and TAF14. Component of the SWI/SNF global transcription activator complex. The 1.14 MDa SWI/SNF complex is composed of 11 different subunits: one copy each of SWI1, SNF2/SWI2, SNF5, SNF12/SWP73, ARP7/SWP61, ARP9/SWP59; two copies each of SWI3, SNF6, SNF11, SWP82; and three copies of TAF14/SWP29. Component of the chromatin-remodeling INO80 complex, at least composed of ARP4, ARP5, ARP8, RVB1, RVB2, TAF14, NHP10, IES1, IES3, IES4, IES6, ACT1, IES2, IES5 and INO80. Component of the NuA3 histone acetyltransferase (HAT) complex. The NuA3 HAT complex has 2 functionally distinct forms that participate in transcription. The NuA3b HAT complex contains an additional subunit, PDP3.

Its subcellular location is the nucleus. Its function is as follows. Functions as a component of the DNA-binding general transcription factor complex TFIID, the RNA polymerase II associated general transcription factor complex TFIIF, and the chromatin-remodeling complex SWI/SNF. Binding of TFIID to a promoter (with or without TATA element) is the initial step in preinitiation complex (PIC) formation. TFIID plays a key role in the regulation of gene expression by RNA polymerase II through different activities such as transcription activator interaction, core promoter recognition and selectivity, TFIIA and TFIIB interaction, chromatin modification (histone acetylation by TAF1), facilitation of DNA opening and initiation of transcription. TFIIF is essential for the initiation of transcription by RNA polymerase II. TFIIF functions include the recruitment of RNA polymerase II to the promoter bound DNA-TBP-TFIIB complex, decreasing the affinity of RNA polymerase II for non-specific DNA, allowing for the subsequent recruitment of TFIIE and TFIIH, and facilitating RNA polymerase II elongation. TAF14 acts as a chromatin reader that specifically recognizes and binds histones that are acylated. Recognizes and binds histone H3 acetylated or crotonylated at 'Lys-9' (H3K9ac and H3K9cr, respectively), with some preference for crotonylated lysine. Component of the SWI/SNF complex, an ATP-dependent chromatin-remodeling complex, is required for the positive and negative regulation of gene expression of a large number of genes. It changes chromatin structure by altering DNA-histone contacts within a nucleosome, leading eventually to a change in nucleosome position, thus facilitating or repressing binding of gene-specific transcription factors. Component of the NuA3 histone acetyltransferase complex. The NuA3 HAT complex has 2 functionally distinct forms. NuA3a binds H3K4me3, through the PHD finger of YNG1, and acetylates H3K14 at the promoter region of actively transcribed genes to promote transcription initiation. NuA3b binds H3K36me3 at the coding regions of actively transcribed genes, through the PWWP domain of PDP3, and coordinates transcription elongation. Does not bind DNA. The polypeptide is Transcription initiation factor TFIID subunit 14 (TAF14) (Saccharomyces cerevisiae (strain ATCC 204508 / S288c) (Baker's yeast)).